A 393-amino-acid polypeptide reads, in one-letter code: Arginine biosynthesis bifunctional protein ArgJ (393 aa).

T143, K168, T179, E265, N388, and T393 together coordinate substrate. The active-site Nucleophile is T179.

The protein belongs to the ArgJ family. Heterotetramer of two alpha and two beta chains.

The protein resides in the cytoplasm. It carries out the reaction N(2)-acetyl-L-ornithine + L-glutamate = N-acetyl-L-glutamate + L-ornithine. The catalysed reaction is L-glutamate + acetyl-CoA = N-acetyl-L-glutamate + CoA + H(+). It participates in amino-acid biosynthesis; L-arginine biosynthesis; L-ornithine and N-acetyl-L-glutamate from L-glutamate and N(2)-acetyl-L-ornithine (cyclic): step 1/1. The protein operates within amino-acid biosynthesis; L-arginine biosynthesis; N(2)-acetyl-L-ornithine from L-glutamate: step 1/4. In terms of biological role, catalyzes two activities which are involved in the cyclic version of arginine biosynthesis: the synthesis of N-acetylglutamate from glutamate and acetyl-CoA as the acetyl donor, and of ornithine by transacetylation between N(2)-acetylornithine and glutamate. In Syntrophotalea carbinolica (strain DSM 2380 / NBRC 103641 / GraBd1) (Pelobacter carbinolicus), this protein is Arginine biosynthesis bifunctional protein ArgJ.